Consider the following 307-residue polypeptide: Small ribosomal subunit protein uS3 (307 aa).

The KH type-2 domain occupies 17–86 (MDEYFAEQLN…NPQIDAQEVK (70 aa)). The span at 201–226 (IEEPAEKPAEKQVEKPAVAPKKEAAK) shows a compositional bias: basic and acidic residues. Residues 201–265 (IEEPAEKPAE…QVEASEDFEE (65 aa)) are disordered. Residues 240 to 265 (PTEEPEVAEPEEAEEAQVEASEDFEE) show a composition bias toward acidic residues.

This sequence belongs to the universal ribosomal protein uS3 family. In terms of assembly, part of the 30S ribosomal subunit.

Its function is as follows. Binds the lower part of the 30S subunit head. The protein is Small ribosomal subunit protein uS3 of Methanosarcina mazei (strain ATCC BAA-159 / DSM 3647 / Goe1 / Go1 / JCM 11833 / OCM 88) (Methanosarcina frisia).